We begin with the raw amino-acid sequence, 539 residues long: 2-isopropylmalate synthase (539 aa).

The Pyruvate carboxyltransferase domain occupies 8–269 (VLIFDTTLRD…YFNPFFGRPP (262 aa)). Aspartate 17, histidine 208, histidine 210, and asparagine 244 together coordinate Mn(2+). Residues 408–539 (QLKLVQVSCG…DLAKVDKKGI (132 aa)) are regulatory domain.

It belongs to the alpha-IPM synthase/homocitrate synthase family. LeuA type 1 subfamily. In terms of assembly, homodimer. Mn(2+) is required as a cofactor.

The protein resides in the cytoplasm. It catalyses the reaction 3-methyl-2-oxobutanoate + acetyl-CoA + H2O = (2S)-2-isopropylmalate + CoA + H(+). Its pathway is amino-acid biosynthesis; L-leucine biosynthesis; L-leucine from 3-methyl-2-oxobutanoate: step 1/4. Its function is as follows. Catalyzes the condensation of the acetyl group of acetyl-CoA with 3-methyl-2-oxobutanoate (2-ketoisovalerate) to form 3-carboxy-3-hydroxy-4-methylpentanoate (2-isopropylmalate). This is 2-isopropylmalate synthase from Prochlorococcus marinus (strain NATL1A).